Here is a 61-residue protein sequence, read N- to C-terminus: Metallothionein-1 (61 aa).

Position 1 is an N-acetylmethionine (methionine 1). Positions 1–29 are beta; it reads MDPNCSCSTGGSCTCTSSCACKNCKCTSC. Residues cysteine 5, cysteine 7, cysteine 13, cysteine 15, cysteine 19, cysteine 21, cysteine 24, cysteine 26, cysteine 29, cysteine 33, cysteine 34, cysteine 36, cysteine 37, cysteine 41, cysteine 44, cysteine 48, cysteine 50, cysteine 57, cysteine 59, and cysteine 60 each coordinate a divalent metal cation. The interval 30–61 is alpha; sequence KKSCCSCCPVGCSKCAQGCVCKGAADKCTCCA.

The protein belongs to the metallothionein superfamily. Type 1 family.

Metallothioneins have a high content of cysteine residues that bind various heavy metals; these proteins are transcriptionally regulated by both heavy metals and glucocorticoids. In Mus musculus (Mouse), this protein is Metallothionein-1 (Mt1).